The sequence spans 268 residues: Phosphate import ATP-binding protein PstB (268 aa).

An ABC transporter domain is found at 22-263 (LAVRNLNFYY…PKQQQTQDYI (242 aa)). 54–61 (GPSGCGKS) serves as a coordination point for ATP.

This sequence belongs to the ABC transporter superfamily. Phosphate importer (TC 3.A.1.7) family. As to quaternary structure, the complex is composed of two ATP-binding proteins (PstB), two transmembrane proteins (PstC and PstA) and a solute-binding protein (PstS).

It is found in the cell inner membrane. The catalysed reaction is phosphate(out) + ATP + H2O = ADP + 2 phosphate(in) + H(+). Its function is as follows. Part of the ABC transporter complex PstSACB involved in phosphate import. Responsible for energy coupling to the transport system. The chain is Phosphate import ATP-binding protein PstB from Gluconobacter oxydans (strain 621H) (Gluconobacter suboxydans).